The chain runs to 169 residues: SsrA-binding protein (169 aa).

This sequence belongs to the SmpB family.

Its subcellular location is the cytoplasm. Required for rescue of stalled ribosomes mediated by trans-translation. Binds to transfer-messenger RNA (tmRNA), required for stable association of tmRNA with ribosomes. tmRNA and SmpB together mimic tRNA shape, replacing the anticodon stem-loop with SmpB. tmRNA is encoded by the ssrA gene; the 2 termini fold to resemble tRNA(Ala) and it encodes a 'tag peptide', a short internal open reading frame. During trans-translation Ala-aminoacylated tmRNA acts like a tRNA, entering the A-site of stalled ribosomes, displacing the stalled mRNA. The ribosome then switches to translate the ORF on the tmRNA; the nascent peptide is terminated with the 'tag peptide' encoded by the tmRNA and targeted for degradation. The ribosome is freed to recommence translation, which seems to be the essential function of trans-translation. The protein is SsrA-binding protein of Mycolicibacterium paratuberculosis (strain ATCC BAA-968 / K-10) (Mycobacterium paratuberculosis).